The sequence spans 350 residues: Hydroxymethylglutaryl-CoA synthase (350 aa).

The active-site Proton donor/acceptor is glutamate 83. The active-site Acyl-thioester intermediate is the cysteine 115. (3S)-3-hydroxy-3-methylglutaryl-CoA contacts are provided by cysteine 115 and threonine 156. Arginine 204 is a binding site for CoA. (3S)-3-hydroxy-3-methylglutaryl-CoA-binding residues include threonine 206 and histidine 239. Residue histidine 239 is the Proton donor/acceptor of the active site. Lysine 244 contributes to the CoA binding site. Asparagine 271 and serine 301 together coordinate (3S)-3-hydroxy-3-methylglutaryl-CoA.

Belongs to the thiolase-like superfamily. Archaeal HMG-CoA synthase family. As to quaternary structure, interacts with acetoacetyl-CoA thiolase that catalyzes the precedent step in the pathway and with a DUF35 protein. The acetoacetyl-CoA thiolase/HMG-CoA synthase complex channels the intermediate via a fused CoA-binding site, which allows for efficient coupling of the endergonic thiolase reaction with the exergonic HMGCS reaction.

It carries out the reaction acetoacetyl-CoA + acetyl-CoA + H2O = (3S)-3-hydroxy-3-methylglutaryl-CoA + CoA + H(+). The protein operates within metabolic intermediate biosynthesis; (R)-mevalonate biosynthesis; (R)-mevalonate from acetyl-CoA: step 2/3. Functionally, catalyzes the condensation of acetyl-CoA with acetoacetyl-CoA to form 3-hydroxy-3-methylglutaryl-CoA (HMG-CoA). Functions in the mevalonate (MVA) pathway leading to isopentenyl diphosphate (IPP), a key precursor for the biosynthesis of isoprenoid compounds that are building blocks of archaeal membrane lipids. This Thermococcus onnurineus (strain NA1) protein is Hydroxymethylglutaryl-CoA synthase.